Here is a 916-residue protein sequence, read N- to C-terminus: Isoleucine--tRNA ligase (916 aa).

The short motif at Pro-57–His-67 is the 'HIGH' region element. Glu-554 lines the L-isoleucyl-5'-AMP pocket. The 'KMSKS' region signature appears at Lys-595–Ser-599. An ATP-binding site is contributed by Lys-598. 4 residues coordinate Zn(2+): Cys-885, Cys-888, Cys-905, and Cys-908.

Belongs to the class-I aminoacyl-tRNA synthetase family. IleS type 1 subfamily. As to quaternary structure, monomer. The cofactor is Zn(2+).

It localises to the cytoplasm. The enzyme catalyses tRNA(Ile) + L-isoleucine + ATP = L-isoleucyl-tRNA(Ile) + AMP + diphosphate. Catalyzes the attachment of isoleucine to tRNA(Ile). As IleRS can inadvertently accommodate and process structurally similar amino acids such as valine, to avoid such errors it has two additional distinct tRNA(Ile)-dependent editing activities. One activity is designated as 'pretransfer' editing and involves the hydrolysis of activated Val-AMP. The other activity is designated 'posttransfer' editing and involves deacylation of mischarged Val-tRNA(Ile). This chain is Isoleucine--tRNA ligase, found in Staphylococcus haemolyticus (strain JCSC1435).